A 663-amino-acid polypeptide reads, in one-letter code: Transmembrane 9 superfamily member 2 (663 aa).

An N-terminal signal peptide occupies residues 1-28 (MSARLPVLSPPRWPRLLLLSLLLLGAVP). Over 29 to 300 (GPRRSGGFYL…LESMPHTHIQ (272 aa)) the chain is Lumenal. The helical transmembrane segment at 301–321 (WFSIMNSLVIVLFLSGMVAMI) threads the bilayer. Topologically, residues 322–374 (MLRTLHKDIARYNQMDSTEDAQEEFGWKLVHGDIFRPPRKGMLLSVFLGSGTQ) are cytoplasmic. A helical membrane pass occupies residues 375-395 (ILIMTFVTLFFACLGFLSPAN). Residues 396–398 (RGA) are Lumenal-facing. Residues 399–419 (LMTCAVVLWVLLGTPAGYVAA) traverse the membrane as a helical segment. The Cytoplasmic portion of the chain corresponds to 420–437 (RFYKSFGGEKWKTNVLLT). The chain crosses the membrane as a helical span at residues 438–458 (SFLCPGIVFADFFIMNLILWG). Topologically, residues 459 to 466 (EGSSAAIP) are lumenal. The chain crosses the membrane as a helical span at residues 467-487 (FGTLVAILALWFCISVPLTFI). The Cytoplasmic segment spans residues 488–522 (GAYFGFKKNAIEHPVRTNQIPRQIPEQSFYTKPLP). A helical transmembrane segment spans residues 523–543 (GIIMGGILPFGCIFIQLFFIL). The Lumenal segment spans residues 544–554 (NSIWSHQMYYM). Residues 555–575 (FGFLFLVFIILVITCSEATIL) traverse the membrane as a helical segment. Residues 576–591 (LCYFHLCAEDYHWQWR) are Cytoplasmic-facing. A helical membrane pass occupies residues 592-612 (SFLTSGFTAVYFLIYAVHYFF). Residues 613–631 (SKLQITGTASTILYFGYTM) are Lumenal-facing. A helical membrane pass occupies residues 632 to 652 (IMVLIFFLFTGTIGFFACFWF). Over 653 to 663 (VTKIYSVVKVD) the chain is Cytoplasmic.

This sequence belongs to the nonaspanin (TM9SF) (TC 9.A.2) family.

The protein localises to the endosome membrane. The protein resides in the golgi outpost. It is found in the cytoplasm. Its subcellular location is the cytoskeleton. It localises to the microtubule organizing center. In the intracellular compartments, may function as a channel or small molecule transporter. This chain is Transmembrane 9 superfamily member 2 (TM9SF2), found in Pongo abelii (Sumatran orangutan).